We begin with the raw amino-acid sequence, 101 residues long: Protein Tat (101 aa).

Residues 1-24 form an interaction with human CREBBP region; it reads MEPVDPRLEPWKHPGSQPKTACTN. The segment at 1–48 is transactivation; that stretch reads MEPVDPRLEPWKHPGSQPKTACTNCYCKKCCFHCQVCFTKKALGISYG. Cysteine 22, cysteine 25, and cysteine 27 together coordinate Zn(2+). The cysteine-rich stretch occupies residues 22–37; the sequence is CTNCYCKKCCFHCQVC. Lysine 28 carries the N6-acetyllysine; by host PCAF modification. Cysteine 30, histidine 33, cysteine 34, and cysteine 37 together coordinate Zn(2+). Residues 38 to 48 form a core region; the sequence is FTKKALGISYG. Residues 47-101 are disordered; that stretch reads YGRKKRRQRRRAHQDSQNHQASLSKQPSSQTRGDPTGPKEPKKEVEREAETDPLD. The segment covering 48 to 58 has biased composition (basic residues); the sequence is GRKKRRQRRRA. The short motif at 49–57 is the Nuclear localization signal, RNA-binding (TAR), and protein transduction element; that stretch reads RKKRRQRRR. Residues 49–86 form an interaction with the host capping enzyme RNGTT region; the sequence is RKKRRQRRRAHQDSQNHQASLSKQPSSQTRGDPTGPKE. 2 positions are modified to N6-acetyllysine; by host EP300 and GCN5L2: lysine 50 and lysine 51. Asymmetric dimethylarginine; by host PRMT6 occurs at positions 52 and 53. Polar residues predominate over residues 61-79; the sequence is DSQNHQASLSKQPSSQTRG. Lysine 71 participates in a covalent cross-link: Glycyl lysine isopeptide (Lys-Gly) (interchain with G-Cter in ubiquitin). The Cell attachment site motif lies at 78 to 80; sequence RGD. The span at 83–101 shows a compositional bias: basic and acidic residues; the sequence is GPKEPKKEVEREAETDPLD.

This sequence belongs to the lentiviruses Tat family. As to quaternary structure, interacts with host CCNT1. Associates with the P-TEFb complex composed at least of Tat, P-TEFb (CDK9 and CCNT1), TAR RNA, RNA Pol II. Recruits the HATs CREBBP, TAF1/TFIID, EP300, PCAF and GCN5L2. Interacts with host KAT5/Tip60; this interaction targets the latter to degradation. Interacts with the host deacetylase SIRT1. Interacts with host capping enzyme RNGTT; this interaction stimulates RNGTT. Binds to host KDR, and to the host integrins ITGAV/ITGB3 and ITGA5/ITGB1. Interacts with host KPNB1/importin beta-1 without previous binding to KPNA1/importin alpha-1. Interacts with EIF2AK2. Interacts with host nucleosome assembly protein NAP1L1; this interaction may be required for the transport of Tat within the nucleus, since the two proteins interact at the nuclear rim. Interacts with host C1QBP/SF2P32; this interaction involves lysine-acetylated Tat. Interacts with the host chemokine receptors CCR2, CCR3 and CXCR4. Interacts with host DPP4/CD26; this interaction may trigger an anti-proliferative effect. Interacts with host LDLR. Interacts with the host extracellular matrix metalloproteinase MMP1. Interacts with host PRMT6; this interaction mediates Tat's methylation. Interacts with, and is ubiquitinated by MDM2/Hdm2. Interacts with host PSMC3 and HTATIP2. Interacts with STAB1; this interaction may overcome SATB1-mediated repression of IL2 and IL2RA (interleukin) in T cells by binding to the same domain than HDAC1. Interacts (when acetylated) with human CDK13, thereby increasing HIV-1 mRNA splicing and promoting the production of the doubly spliced HIV-1 protein Nef. Interacts with host TBP; this interaction modulates the activity of transcriptional pre-initiation complex. Interacts with host RELA. Interacts with host PLSCR1; this interaction negatively regulates Tat transactivation activity by altering its subcellular distribution. Post-translationally, asymmetrical arginine methylation by host PRMT6 seems to diminish the transactivation capacity of Tat and affects the interaction with host CCNT1. Acetylation by EP300, CREBBP, GCN5L2/GCN5 and PCAF regulates the transactivation activity of Tat. EP300-mediated acetylation of Lys-50 promotes dissociation of Tat from the TAR RNA through the competitive binding to PCAF's bromodomain. In addition, the non-acetylated Tat's N-terminus can also interact with PCAF. PCAF-mediated acetylation of Lys-28 enhances Tat's binding to CCNT1. Lys-50 is deacetylated by SIRT1. In terms of processing, polyubiquitination by host MDM2 does not target Tat to degradation, but activates its transactivation function and fosters interaction with CCNT1 and TAR RNA. Post-translationally, phosphorylated by EIF2AK2 on serine and threonine residues adjacent to the basic region important for TAR RNA binding and function. Phosphorylation of Tat by EIF2AK2 is dependent on the prior activation of EIF2AK2 by dsRNA.

Its subcellular location is the host nucleus. It is found in the host nucleolus. It localises to the host cytoplasm. The protein resides in the secreted. Transcriptional activator that increases RNA Pol II processivity, thereby increasing the level of full-length viral transcripts. Recognizes a hairpin structure at the 5'-LTR of the nascent viral mRNAs referred to as the transactivation responsive RNA element (TAR) and recruits the cyclin T1-CDK9 complex (P-TEFb complex) that will in turn hyperphosphorylate the RNA polymerase II to allow efficient elongation. The CDK9 component of P-TEFb and other Tat-activated kinases hyperphosphorylate the C-terminus of RNA Pol II that becomes stabilized and much more processive. Other factors such as HTATSF1/Tat-SF1, SUPT5H/SPT5, and HTATIP2 are also important for Tat's function. Besides its effect on RNA Pol II processivity, Tat induces chromatin remodeling of proviral genes by recruiting the histone acetyltransferases (HATs) CREBBP, EP300 and PCAF to the chromatin. This also contributes to the increase in proviral transcription rate, especially when the provirus integrates in transcriptionally silent region of the host genome. To ensure maximal activation of the LTR, Tat mediates nuclear translocation of NF-kappa-B by interacting with host RELA. Through its interaction with host TBP, Tat may also modulate transcription initiation. Tat can reactivate a latently infected cell by penetrating in it and transactivating its LTR promoter. In the cytoplasm, Tat is thought to act as a translational activator of HIV-1 mRNAs. Functionally, extracellular circulating Tat can be endocytosed by surrounding uninfected cells via the binding to several surface receptors such as CD26, CXCR4, heparan sulfate proteoglycans (HSPG) or LDLR. Neurons are rarely infected, but they internalize Tat via their LDLR. Through its interaction with nuclear HATs, Tat is potentially able to control the acetylation-dependent cellular gene expression. Modulates the expression of many cellular genes involved in cell survival, proliferation or in coding for cytokines or cytokine receptors. Tat plays a role in T-cell and neurons apoptosis. Tat induced neurotoxicity and apoptosis probably contribute to neuroAIDS. Circulating Tat also acts as a chemokine-like and/or growth factor-like molecule that binds to specific receptors on the surface of the cells, affecting many cellular pathways. In the vascular system, Tat binds to ITGAV/ITGB3 and ITGA5/ITGB1 integrins dimers at the surface of endothelial cells and competes with bFGF for heparin-binding sites, leading to an excess of soluble bFGF. The protein is Protein Tat of Homo sapiens (Human).